We begin with the raw amino-acid sequence, 461 residues long: Cysteine--tRNA ligase (461 aa).

Cys28 contributes to the Zn(2+) binding site. A 'HIGH' region motif is present at residues 30-40; sequence ITVYDLCHIGH. 3 residues coordinate Zn(2+): Cys209, His234, and Glu238. Residues 266–270 carry the 'KMSKS' region motif; sequence KMSKS. Lys269 contributes to the ATP binding site.

It belongs to the class-I aminoacyl-tRNA synthetase family. Monomer. The cofactor is Zn(2+).

The protein resides in the cytoplasm. The catalysed reaction is tRNA(Cys) + L-cysteine + ATP = L-cysteinyl-tRNA(Cys) + AMP + diphosphate. This Salmonella dublin (strain CT_02021853) protein is Cysteine--tRNA ligase.